Here is a 227-residue protein sequence, read N- to C-terminus: Phosphoribosylformylglycinamidine synthase subunit PurQ (227 aa).

The Glutamine amidotransferase type-1 domain occupies 3-225 (FAVIVFPGSN…LKQWRETYVV (223 aa)). C86 functions as the Nucleophile in the catalytic mechanism. Active-site residues include H194 and E196.

As to quaternary structure, part of the FGAM synthase complex composed of 1 PurL, 1 PurQ and 2 PurS subunits.

It localises to the cytoplasm. The enzyme catalyses N(2)-formyl-N(1)-(5-phospho-beta-D-ribosyl)glycinamide + L-glutamine + ATP + H2O = 2-formamido-N(1)-(5-O-phospho-beta-D-ribosyl)acetamidine + L-glutamate + ADP + phosphate + H(+). The catalysed reaction is L-glutamine + H2O = L-glutamate + NH4(+). It participates in purine metabolism; IMP biosynthesis via de novo pathway; 5-amino-1-(5-phospho-D-ribosyl)imidazole from N(2)-formyl-N(1)-(5-phospho-D-ribosyl)glycinamide: step 1/2. In terms of biological role, part of the phosphoribosylformylglycinamidine synthase complex involved in the purines biosynthetic pathway. Catalyzes the ATP-dependent conversion of formylglycinamide ribonucleotide (FGAR) and glutamine to yield formylglycinamidine ribonucleotide (FGAM) and glutamate. The FGAM synthase complex is composed of three subunits. PurQ produces an ammonia molecule by converting glutamine to glutamate. PurL transfers the ammonia molecule to FGAR to form FGAM in an ATP-dependent manner. PurS interacts with PurQ and PurL and is thought to assist in the transfer of the ammonia molecule from PurQ to PurL. The chain is Phosphoribosylformylglycinamidine synthase subunit PurQ from Bacillus mycoides (strain KBAB4) (Bacillus weihenstephanensis).